The sequence spans 530 residues: AAA-ATPase At3g28510 (530 aa).

The helical transmembrane segment at 5–25 (GAIWGITGTTVTSFMFFWAIY) threads the bilayer. 250–257 (GPPGTGKS) provides a ligand contact to ATP. 2 disordered regions span residues 312-339 (QRKKKKEEDEEEDGEEKKEGEKKPKVDD) and 463-530 (KARK…KSDS). Composition is skewed to basic and acidic residues over residues 326–339 (EEKKEGEKKPKVDD) and 463–511 (KARK…KEEN). Polar residues predominate over residues 512-523 (GNVSQQNGNSID).

This sequence belongs to the AAA ATPase family. BCS1 subfamily. Mg(2+) is required as a cofactor.

The protein localises to the membrane. It carries out the reaction ATP + H2O = ADP + phosphate + H(+). The chain is AAA-ATPase At3g28510 from Arabidopsis thaliana (Mouse-ear cress).